A 297-amino-acid polypeptide reads, in one-letter code: Calponin-1 (297 aa).

In terms of domain architecture, Calponin-homology (CH) spans 28 to 131; sequence HQREQELREW…STLLALASMA (104 aa). Serine 48 carries the post-translational modification Phosphoserine. Calponin-like repeat units lie at residues 164–189, 204–229, and 243–268; these read IGLQMGTNKFASQQGMTAYGTRRHLY, ISLQMGTNKGASQAGMTAPGTKRQIF, and VSLQMGSNKGASQRGMTVYGLPRQVY. Threonine 170 is subject to Phosphothreonine; by ROCK2. At serine 175 the chain carries Phosphoserine; by ROCK2. Phosphothreonine; by ROCK2 occurs at positions 180 and 184. Threonine 259 bears the Phosphothreonine; by ROCK2 mark.

This sequence belongs to the calponin family. In terms of assembly, part of cGMP kinase signaling complex at least composed of ACTA2/alpha-actin, CNN1/calponin H1, PLN/phospholamban, PRKG1 and ITPR1. In terms of tissue distribution, smooth muscle, and tissues containing significant amounts of smooth muscle.

Functionally, thin filament-associated protein that is implicated in the regulation and modulation of smooth muscle contraction. It is capable of binding to actin, calmodulin and tropomyosin. The interaction of calponin with actin inhibits the actomyosin Mg-ATPase activity. This Rattus norvegicus (Rat) protein is Calponin-1 (Cnn1).